We begin with the raw amino-acid sequence, 494 residues long: Putative glucuronosyltransferase PGSIP7 (494 aa).

A helical transmembrane segment spans residues 4 to 24 (QRTLMFSCWVLSLLIIKTTAY). Residues Asp161 and Asp163 each contribute to the Mn(2+) site. Helical transmembrane passes span 316 to 336 (YSAE…IILV), 362 to 382 (AFKF…FFII), 389 to 409 (LIGW…PINA), 410 to 430 (FLLP…TLLV), and 444 to 464 (LSVF…FVKI).

Belongs to the glycosyltransferase 8 family. Glycogenin subfamily. It depends on Mn(2+) as a cofactor.

Its subcellular location is the membrane. The chain is Putative glucuronosyltransferase PGSIP7 (PGSIP7) from Arabidopsis thaliana (Mouse-ear cress).